The chain runs to 438 residues: Glutaryl-CoA dehydrogenase, mitochondrial (438 aa).

Residues 1-44 (MALRGVYAQLLNRGPGLRVFRSWSSATAQTEKGEKTQSRSAKPS) constitute a mitochondrion transit peptide. Substrate-binding positions include 138–139 (RS) and Ser186. FAD contacts are provided by residues 177 to 186 (FGLTEPNHGS), Ser186, and 212 to 214 (WIT). An N6-acetyllysine modification is found at Lys240. Residue 287–294 (FGCLNNAR) participates in substrate binding. FAD is bound by residues Arg319, Gln330, and 387 to 391 (DMLGG). Glu414 (proton acceptor) is an active-site residue. Gly415 is a binding site for substrate. FAD is bound by residues Thr416, 416–418 (THD), and Phe434.

It belongs to the acyl-CoA dehydrogenase family. Homotetramer. The cofactor is FAD.

It localises to the mitochondrion matrix. It catalyses the reaction glutaryl-CoA + oxidized [electron-transfer flavoprotein] + 2 H(+) = (2E)-butenoyl-CoA + reduced [electron-transfer flavoprotein] + CO2. It participates in amino-acid metabolism; lysine degradation. It functions in the pathway amino-acid metabolism; tryptophan metabolism. In terms of biological role, catalyzes the oxidative decarboxylation of glutaryl-CoA to crotonyl-CoA and CO(2) in the degradative pathway of L-lysine, L-hydroxylysine, and L-tryptophan metabolism. It uses electron transfer flavoprotein as its electron acceptor. This is Glutaryl-CoA dehydrogenase, mitochondrial (GCDH) from Bos taurus (Bovine).